Here is a 197-residue protein sequence, read N- to C-terminus: MKKVIIVDASVTPSGSYTHLLLDRFLQTYKKQNSSVEFIDWNLNELPVGKISYNTQNASNFFSFENSDYYIDALKTAYGIVILAPMTNFNYPASLKNFIDHVFVANKTFQDKYVTKGASKGLLTNLKVVVLASQGAPLGWYPWADHVSNLKGLFGFAGVTHFESVLIDDTKILYKDKNKQEVVDLFAHKVDQVANNF.

FMN is bound at residue S10.

Belongs to the azoreductase type 1 family. Homodimer. FMN is required as a cofactor.

The catalysed reaction is 2 a quinone + NADH + H(+) = 2 a 1,4-benzosemiquinone + NAD(+). It carries out the reaction N,N-dimethyl-1,4-phenylenediamine + anthranilate + 2 NAD(+) = 2-(4-dimethylaminophenyl)diazenylbenzoate + 2 NADH + 2 H(+). Its function is as follows. Quinone reductase that provides resistance to thiol-specific stress caused by electrophilic quinones. In terms of biological role, also exhibits azoreductase activity. Catalyzes the reductive cleavage of the azo bond in aromatic azo compounds to the corresponding amines. This is FMN-dependent NADH:quinone oxidoreductase from Mycoplasma genitalium (strain ATCC 33530 / DSM 19775 / NCTC 10195 / G37) (Mycoplasmoides genitalium).